Reading from the N-terminus, the 116-residue chain is Protein Wnt-5(I) (116 aa).

The O-palmitoleoyl serine; by PORCN moiety is linked to residue Ser1. Asn69 carries an N-linked (GlcNAc...) asparagine glycan. The cysteines at positions 82 and 97 are disulfide-linked.

Belongs to the Wnt family. Post-translationally, palmitoleoylation is required for efficient binding to frizzled receptors. Depalmitoleoylation leads to Wnt signaling pathway inhibition.

The protein resides in the secreted. Its subcellular location is the extracellular space. It localises to the extracellular matrix. Functionally, ligand for members of the frizzled family of seven transmembrane receptors. Probable developmental protein. May be a signaling molecule which affects the development of discrete regions of tissues. Is likely to signal over only few cell diameters. In Eptatretus stoutii (Pacific hagfish), this protein is Protein Wnt-5(I) (WNT-5(I)).